A 300-amino-acid polypeptide reads, in one-letter code: Mitochondrial tricarboxylate transporter 1 (300 aa).

Solcar repeat units follow at residues 8–98 (VSPS…FRSM), 107–197 (LSNS…LRDW), and 209–294 (INWL…VVWL). A run of 6 helical transmembrane segments spans residues 11–31 (SVSVVAGATAGAVEGVATFPI), 67–87 (PKGLFRGCTAMVVGNAGKAGV), 114–134 (LAGMGAGTLEAIFAVTPSETI), 172–191 (GVVPVVMRQGSASAIRLGTY), 208–228 (LINWLATFSIGAASGVVAVYG), and 277–297 (LIVSGGVIFSVYEQVVWLLAG).

Belongs to the mitochondrial carrier (TC 2.A.29) family.

It is found in the mitochondrion membrane. Functionally, mitochondrial tricarboxylate transporter; part of the gene cluster that mediates the biosynthesis of itaconic acid and 2-hydroxyparaconate. Cis-aconitate is secreted by the mitochondrial tricarboxylate transporter MTT1. In the cytosol cis-aconitate is converted into trans-aconitate via isomerization by the aconitate-delta-isomerase ADI1. Decarboxylation of trans-aconitate by the trans-aconitate decarboxylase TAD1 then leads then to the production of itaconic acid. The cytochrome P450 monooxygenase CYP3 further converts itaconate to 2-hydroxyparaconate via oxidation of the double bond, leading to a transient epoxide, which can subsequently be lactonized to produce 2-hydroxyparaconate. Secretion of itaconate and possibly 2-hydroxyparaconate into the medium is mediated by the major facilitator ITP1. The glyoxalase domain-containing protein RDO1 is not involved in the biosynthesis of itaconate and 2-hydroxyparaconate, however, it might play a role in the further conversion of 2-hydroxyparaconate to itatartarate. This is Mitochondrial tricarboxylate transporter 1 from Mycosarcoma maydis (Corn smut fungus).